Reading from the N-terminus, the 159-residue chain is Sulfur carrier protein DsrE2 (159 aa).

2 consecutive transmembrane segments (helical) span residues 21-43 and 72-91; these read PFIL…TFYG and WFPV…TAMM.

It is found in the cell membrane. It participates in energy metabolism; sulfur metabolism. Sulfur carrier protein probably involved in sulfur trafficking for oxidative dissimilatory sulfur metabolism. May be a component of a cytoplasmic sulfur relay system delivering sulfur to DsrC. Binds sulfur in the presence of sulfide in vitro. The protein is Sulfur carrier protein DsrE2 of Allochromatium vinosum (strain ATCC 17899 / DSM 180 / NBRC 103801 / NCIMB 10441 / D) (Chromatium vinosum).